A 260-amino-acid polypeptide reads, in one-letter code: Adenosylcobinamide-GDP ribazoletransferase (260 aa).

6 helical membrane-spanning segments follow: residues 40-60 (AFPFAGLLIGFVPAVTLLLLL), 64-84 (TDPLVAALVALSVQALVTGAL), 117-137 (YGAIALILSFAIRAAALAAII), 142-162 (PLAAALAIPAVAALSRGAIAW), 188-208 (HFALVSAGLLAALLIWPPFGL), and 210-230 (PLVAGLLVAGVAGFAFTVFIR).

The protein belongs to the CobS family. Mg(2+) serves as cofactor.

The protein localises to the cell inner membrane. The catalysed reaction is alpha-ribazole + adenosylcob(III)inamide-GDP = adenosylcob(III)alamin + GMP + H(+). The enzyme catalyses alpha-ribazole 5'-phosphate + adenosylcob(III)inamide-GDP = adenosylcob(III)alamin 5'-phosphate + GMP + H(+). It functions in the pathway cofactor biosynthesis; adenosylcobalamin biosynthesis; adenosylcobalamin from cob(II)yrinate a,c-diamide: step 7/7. Joins adenosylcobinamide-GDP and alpha-ribazole to generate adenosylcobalamin (Ado-cobalamin). Also synthesizes adenosylcobalamin 5'-phosphate from adenosylcobinamide-GDP and alpha-ribazole 5'-phosphate. The protein is Adenosylcobinamide-GDP ribazoletransferase of Rhizobium etli (strain ATCC 51251 / DSM 11541 / JCM 21823 / NBRC 15573 / CFN 42).